The following is a 582-amino-acid chain: MLRLRPAVRAVSVARSVALTRSLHVSVAKFNKIEGTAPAGLPKEVKQTAGHQGHHQEIPKPDENHPRRKKFHFWRSLWRLTYLSAIASLGYIGYRIYVIRNPSDQLPADPSKKTLVVLGSGWGSVSFLKKLDTSNYNVIVVSPRNYFLFTPLLPSCPTGTIEHRSIMEPIRGIIRHKQAECQYLEADATKIDHEKRIVTIRSAVSENSKEEVIKEIPFDYLVVGVGAMSSTFGIPGVQENACFLKEIPDAQQIRRTLMDCIEKAQFEKDPEVRKRLLHTVVVGGGPTGVEFAAELQDFFEDDLRKWIPDIRDDFKVTLVEALPNVLPSFSKKLIDYTEKTFSDEKISILTKTMVKSVDENVIRAEQTKGDGTKETLEMPYGTLVWATGNTVRPVVRELMSKIPAQKGSRRGLLVNEYLVVEGTEGIWALGDCSATKYAPTAQVASQEGSYLANLLNGIAKTEDLNNEITNLEKQSEHTFDEQERKNIFAQLESKSRKLRRSRAMLPFEYSHQGSLAYIGSDRAVADLSFNFWGIMNWSSGGTMTYYFWRSAYVSMCFSMRNKILVCIDWMKVRVFGRDISRE.

Residues 1 to 30 (MLRLRPAVRAVSVARSVALTRSLHVSVAKF) constitute a mitochondrion transit peptide. The interval 46–65 (KQTAGHQGHHQEIPKPDENH) is disordered. Residues 54–65 (HHQEIPKPDENH) are compositionally biased toward basic and acidic residues. 114–144 (TLVVLGSGWGSVSFLKKLDTSNYNVIVVSPR) provides a ligand contact to FAD. 277–313 (LHTVVVGGGPTGVEFAAELQDFFEDDLRKWIPDIRDD) contacts NAD(+). The stretch at 454-501 (LLNGIAKTEDLNNEITNLEKQSEHTFDEQERKNIFAQLESKSRKLRRS) forms a coiled coil.

It belongs to the NADH dehydrogenase family. Requires FAD as cofactor.

Its subcellular location is the mitochondrion inner membrane. The enzyme catalyses a quinone + NADH + H(+) = a quinol + NAD(+). The catalysed reaction is a ubiquinone + NADH + H(+) = a ubiquinol + NAD(+). Alternative NADH-ubiquinone oxidoreductase which catalyzes the oxidation of mitochondrial NADH does not translocate protons across the inner mitochondrial membrane. The protein is External alternative NADH-ubiquinone oxidoreductase, mitochondrial (NDH2) of Yarrowia lipolytica (strain CLIB 122 / E 150) (Yeast).